Reading from the N-terminus, the 757-residue chain is Cartilage oligomeric matrix protein (757 aa).

The N-terminal stretch at 1–20 (MVPDTACVLLLTLAALGASG) is a signal peptide. Residues 22 to 86 (GQSPLGSDLG…SVRTGLPSVR (65 aa)) are COMP N-terminal. The region spanning 87–126 (PLLHCAPGFCFPGVACIQTESGARCGPCPAGFTGNGSHCT) is the EGF-like 1 domain. 21 disulfide bridges follow: Cys91-Cys102, Cys96-Cys111, Cys114-Cys125, Cys131-Cys142, Cys136-Cys151, Cys154-Cys178, Cys184-Cys197, Cys191-Cys206, Cys209-Cys221, Cys229-Cys243, Cys237-Cys253, Cys255-Cys266, Cys282-Cys287, Cys292-Cys312, Cys328-Cys348, Cys351-Cys371, Cys387-Cys407, Cys410-Cys430, Cys448-Cys468, Cys484-Cys504, and Cys520-Cys741. Asn121 carries an N-linked (GlcNAc...) asparagine glycan. Residues 127–179 (DVNECNAHPCFPRVRCINTSPGFRCEACPPGYSGPTHQGVGLAFAKANKQVCT) form the EGF-like 2; calcium-binding domain. In terms of domain architecture, EGF-like 3; calcium-binding spans 180–222 (DINECETGQHNCVPNSVCINTRGSFQCGPCQPGFVGDQASGCQ). Positions 225-267 (AQRFCPDGSPSECHEHADCVLERDGSRSCVCAVGWAGNGILCG) constitute an EGF-like 4 domain. 8 TSP type-3 repeats span residues 268-300 (RDTD…NSGQ), 301-336 (EDVD…NPDQ), 337-359 (RNTD…NDDQ), 360-395 (KDTD…NSDQ), 396-418 (KDSD…NPDQ), 419-456 (ADVD…NSAQ), 457-492 (EDSD…NPGQ), and 493-528 (EDAD…EVTL). Positions 298–503 (SGQEDVDRDG…DADRDGVGDV (206 aa)) are disordered. Basic and acidic residues-rich tracts occupy residues 334 to 346 (PDQR…KWGD) and 352 to 370 (RSQK…RGDA). Residues 367-369 (RGD) carry the Cell attachment site motif. A compositionally biased stretch (acidic residues) spans 467 to 476 (ACDDDDDNDG). A mediates cell survival and induction of the IAP family of survival proteins region spans residues 527 to 757 (TLTDFRAFQT…DYETHQLRQA (231 aa)). The region spanning 532–746 (RAFQTVVLDP…LRYRCNDTIP (215 aa)) is the TSP C-terminal domain. An N-linked (GlcNAc...) asparagine glycan is attached at Asn742.

The protein belongs to the thrombospondin family. Pentamer; disulfide-linked. Exists in a more compact conformation in the presence of calcium and shows a more extended conformation in the absence of calcium. Interacts with ITGB3, ITGA5 and FN1. Binding to FN1 requires the presence of divalent cations (Ca(2+), Mg(2+) or Mn(2+)). The greatest amount of binding is seen in the presence of Mn(2+). Interacts with MATN1, MATN3, MATN4 and ACAN. Binds heparin, heparan sulfate and chondroitin sulfate. EDTA dimishes significantly its binding to ACAN and abolishes its binding to MATN3, MATN4 and chondroitin sulfate. Interacts with collagen I, II and IX, and interaction with these collagens is dependent on the presence of zinc ions. Interacts with ADAMTS12. Interacts with ITGA7. Requires Ca(2+) as cofactor. Post-translationally, proteolytically cleaved by metalloproteases ADAMTS4 and ADAMTS1 with ADAMTS4 showing more potent activity. In terms of tissue distribution, abundantly expressed in the chondrocyte extracellular matrix, and is also found in bone, tendon, ligament and synovium and blood vessels. Increased amounts are produced during late stages of osteoarthritis in the area adjacent to the main defect.

It is found in the secreted. The protein localises to the extracellular space. Its subcellular location is the extracellular matrix. Its function is as follows. Plays a role in the structural integrity of cartilage via its interaction with other extracellular matrix proteins such as the collagens and fibronectin. Can mediate the interaction of chondrocytes with the cartilage extracellular matrix through interaction with cell surface integrin receptors. Could play a role in the pathogenesis of osteoarthritis. Potent suppressor of apoptosis in both primary chondrocytes and transformed cells. Suppresses apoptosis by blocking the activation of caspase-3 and by inducing the IAP family of survival proteins (BIRC3, BIRC2, BIRC5 and XIAP). Essential for maintaining a vascular smooth muscle cells (VSMCs) contractile/differentiated phenotype under physiological and pathological stimuli. Maintains this phenotype of VSMCs by interacting with ITGA7. This is Cartilage oligomeric matrix protein from Homo sapiens (Human).